We begin with the raw amino-acid sequence, 476 residues long: UDP-N-acetylmuramate--L-alanine ligase (476 aa).

126 to 132 contributes to the ATP binding site; that stretch reads GAHGKTT.

The protein belongs to the MurCDEF family.

The protein localises to the cytoplasm. It catalyses the reaction UDP-N-acetyl-alpha-D-muramate + L-alanine + ATP = UDP-N-acetyl-alpha-D-muramoyl-L-alanine + ADP + phosphate + H(+). Its pathway is cell wall biogenesis; peptidoglycan biosynthesis. Cell wall formation. The sequence is that of UDP-N-acetylmuramate--L-alanine ligase from Psychrobacter sp. (strain PRwf-1).